The sequence spans 227 residues: 2-C-methyl-D-erythritol 4-phosphate cytidylyltransferase (227 aa).

It belongs to the IspD/TarI cytidylyltransferase family. IspD subfamily.

The enzyme catalyses 2-C-methyl-D-erythritol 4-phosphate + CTP + H(+) = 4-CDP-2-C-methyl-D-erythritol + diphosphate. It functions in the pathway isoprenoid biosynthesis; isopentenyl diphosphate biosynthesis via DXP pathway; isopentenyl diphosphate from 1-deoxy-D-xylulose 5-phosphate: step 2/6. Functionally, catalyzes the formation of 4-diphosphocytidyl-2-C-methyl-D-erythritol from CTP and 2-C-methyl-D-erythritol 4-phosphate (MEP). This is 2-C-methyl-D-erythritol 4-phosphate cytidylyltransferase from Deinococcus geothermalis (strain DSM 11300 / CIP 105573 / AG-3a).